A 407-amino-acid chain; its full sequence is Zinc finger protein 260 (407 aa).

The disordered stretch occupies residues methionine 1–lysine 21. The segment covering glutamate 10–lysine 21 has biased composition (basic and acidic residues). The C2H2-type 1 zinc-finger motif lies at tyrosine 23–histidine 45. The segment at proline 51–arginine 73 adopts a C2H2-type 2; degenerate zinc-finger fold. 11 consecutive C2H2-type zinc fingers follow at residues tyrosine 79–histidine 101, tyrosine 131–histidine 153, phenylalanine 159–histidine 181, phenylalanine 187–histidine 209, tyrosine 215–histidine 237, tyrosine 243–histidine 265, tyrosine 271–histidine 293, tyrosine 299–histidine 321, tyrosine 327–histidine 349, tyrosine 355–histidine 377, and tyrosine 383–histidine 405.

The protein belongs to the krueppel C2H2-type zinc-finger protein family. As to quaternary structure, binds DNA. Interacts with GATA4. As to expression, expressed in both embryonic, fetal and adult heart. Also expressed in lung, skeletal muscle and adrenal glands.

The protein localises to the nucleus. Transcription factor that acts as a cardiac regulator and an effector of alpha1-adrenergic signaling. Binds to PE response elements (PERE) present in the promoter of genes such as ANF/NPPA and acts as a direct transcriptional activator of NPPA. Also acts as a cofactor with GATA4, a key cardiac regulator. The polypeptide is Zinc finger protein 260 (Znf260) (Rattus norvegicus (Rat)).